The primary structure comprises 305 residues: RNA-binding protein with serine-rich domain 1 (305 aa).

A compositionally biased stretch (basic residues) spans 1 to 10 (MDLSGVKKKS). Positions 1–161 (MDLSGVKKKS…KRRSPSPKPT (161 aa)) are necessary for interaction with SRP54, nuclear localization and exon-skipping. The segment at 1–170 (MDLSGVKKKS…TKVHIGRLTR (170 aa)) is disordered. The interval 1–220 (MDLSGVKKKS…ENPDEAEKAL (220 aa)) is necessary for interaction with the cleaved p110 isoform of CDC2L1. Glycyl lysine isopeptide (Lys-Gly) (interchain with G-Cter in SUMO2) cross-links involve residues lysine 7 and lysine 15. Positions 33–59 (DRSDEKSKDRSKDKGTTKESSEKDRGR) are enriched in basic and acidic residues. The residue at position 53 (serine 53) is a Phosphoserine. The span at 68–126 (ASSGSSSTRSRSSSTSSSGSSTSTGSSSGSSSSSASSRSGSSSTSRSSSSSSSSGSPSP) shows a compositional bias: low complexity. A necessary for interactions with UPF2 and UPF3B and UPF2-dependent NMD region spans residues 69-121 (SSGSSSTRSRSSSTSSSGSSTSTGSSSGSSSSSASSRSGSSSTSRSSSSSSSS). 2 stretches are compositionally biased toward basic residues: residues 127–143 (SRRR…KSKP) and 151–167 (RKRR…HIGR). 2 positions are modified to phosphoserine: serine 155 and serine 157. The interval 156-242 (PSPKPTKVHI…ITATAVLAPW (87 aa)) is necessary for interaction with PNN and exon-skipping. Positions 159–244 (KPTKVHIGRL…ATAVLAPWPR (86 aa)) are interaction with SAP18 and ACIN1. Phosphothreonine is present on threonine 161. Residues 161-240 (TKVHIGRLTR…QEITATAVLA (80 aa)) form the RRM domain. The residue at position 218 (lysine 218) is an N6-acetyllysine. Positions 238-305 (VLAPWPRPPP…RSRSSSNSSR (68 aa)) are necessary for interaction with TRA2B, nuclear localization and exon-skipping. The tract at residues 240 to 305 (APWPRPPPRR…RSRSSSNSSR (66 aa)) is disordered. Residues 242-262 (WPRPPPRRFSPPRRMLPPPPM) are compositionally biased toward pro residues. Basic residues predominate over residues 266-298 (SPPRMRRRSRSPRRRSPVRRRSRSPGRRRHRSR).

Belongs to the splicing factor SR family. As to quaternary structure, found in mRNA splicing-dependent exon junction complexes (EJC). Found in a post-splicing complex with NXF1, RBM8A, UPF1, UPF2, UPF3A, UPF3B and RNPS1. Component of the heterotrimeric ASAP (apoptosis- and splicing-associated protein) and PSAP complexes consisting of RNPS1, SAP18 and either ACIN1 or PNN, respectively; the ASAP and PSAP complexes probably are formed mutually exclusive. Component of the active spliceosome. Associates with polysomes. Interacts with the cleaved p110 isoform of CDC2L1, CSNK2A1, PNN, SART3, SRP54, SRRM1 and TRA2B/SFRS10. Post-translationally, phosphorylated on one or more of the four Ser/Thr residues (Ser-43, Thr-49, Ser-52 or Ser-53). Ser-53 phosphorylation site is important for splicing and translation stimulation activity in vitro.

It localises to the nucleus. Its subcellular location is the nucleus speckle. The protein resides in the cytoplasm. Part of pre- and post-splicing multiprotein mRNP complexes. Auxiliary component of the splicing-dependent multiprotein exon junction complex (EJC) deposited at splice junction on mRNAs. The EJC is a dynamic structure consisting of core proteins and several peripheral nuclear and cytoplasmic associated factors that join the complex only transiently either during EJC assembly or during subsequent mRNA metabolism. Component of the ASAP and PSAP complexes which bind RNA in a sequence-independent manner and are proposed to be recruited to the EJC prior to or during the splicing process and to regulate specific excision of introns in specific transcription subsets. The ASAP complex can inhibit RNA processing during in vitro splicing reactions. The ASAP complex promotes apoptosis and is disassembled after induction of apoptosis. Enhances the formation of the ATP-dependent A complex of the spliceosome. Involved in both constitutive splicing and, in association with SRP54 and TRA2B/SFRS10, in distinctive modulation of alternative splicing in a substrate-dependent manner. Involved in the splicing modulation of BCL2L1/Bcl-X (and probably other apoptotic genes); specifically inhibits formation of proapoptotic isoforms such as Bcl-X(S); the activity is different from the established EJC assembly and function. Participates in mRNA 3'-end cleavage. Involved in UPF2-dependent nonsense-mediated decay (NMD) of mRNAs containing premature stop codons. Also mediates increase of mRNA abundance and translational efficiency. Binds spliced mRNA 20-25 nt upstream of exon-exon junctions. This chain is RNA-binding protein with serine-rich domain 1 (Rnps1), found in Rattus norvegicus (Rat).